The sequence spans 452 residues: MAAAALRGGWCRCPRRCLGSGIQFLSSHNLPHGSSYQISRPGRELTLTKSYSSGSRKGFLSGLLDNIKQELAKNKEMKESIKKFRDEAKKLEESDALQEARRKYKSIESETVRTSEAIKKKLGELTGTVKESLDEVSKSDLGRKIKEGVEEAARTAKQSAESVSKSGEKLGKTAAFKAISQGVESVKKELDESVLGQTGPYRRPERLRKRTEFAGAKFKESKVFEANEEALGVVLHKDSKWYQQWKDFKDNNVVFNRFFEMKMKYDESDNVLIRASRALTDKVTDLLGGLFSKTEMSEVLTEILRVDPTFDKDHFLHQCETDIIPNILEAMISGELDILKDWCYEATYSQLAHPIQQAKALGFQFHSRILDISNVDLAMGKMMEQGPVLIVTFQAQVVMVIKNSKGEVYDGDPDKVQRMLYVWALCRDQEELNPYAAWRLLDISASSTEQIL.

A Phosphothreonine modification is found at Thr128. 166-173 (SGEKLGKT) provides a ligand contact to ATP. Lys177 bears the N6-succinyllysine mark. Ser180 is subject to Phosphoserine. Residue Lys217 is modified to N6-succinyllysine.

This sequence belongs to the Tim44 family. As to quaternary structure, probable component of the PAM complex at least composed of a mitochondrial HSP70 protein, GRPEL1 or GRPEL2, TIMM44, TIMM16/PAM16 and TIMM14/DNAJC19. The complex interacts with the TIMM23 component of the TIM23 complex. Interacts with SLC25A4/ANT1 and SLC25A5/ANT2; leading to inhibit the presequence translocase TIMM23, thereby promoting stabilization of PINK1.

The protein resides in the mitochondrion inner membrane. Its function is as follows. Essential component of the PAM complex, a complex required for the translocation of transit peptide-containing proteins from the inner membrane into the mitochondrial matrix in an ATP-dependent manner. Recruits mitochondrial HSP70 to drive protein translocation into the matrix using ATP as an energy source. The protein is Mitochondrial import inner membrane translocase subunit TIM44 (Timm44) of Mus musculus (Mouse).